A 36-amino-acid polypeptide reads, in one-letter code: Cytochrome b6-f complex subunit 5 (36 aa).

Residues 5-25 traverse the membrane as a helical segment; that stretch reads LLAGIVLGLVPVTLAGLFVAA.

This sequence belongs to the PetG family. As to quaternary structure, the 4 large subunits of the cytochrome b6-f complex are cytochrome b6, subunit IV (17 kDa polypeptide, PetD), cytochrome f and the Rieske protein, while the 4 small subunits are PetG, PetL, PetM and PetN. The complex functions as a dimer.

The protein resides in the cellular thylakoid membrane. Its function is as follows. Component of the cytochrome b6-f complex, which mediates electron transfer between photosystem II (PSII) and photosystem I (PSI), cyclic electron flow around PSI, and state transitions. PetG is required for either the stability or assembly of the cytochrome b6-f complex. This Acaryochloris marina (strain MBIC 11017) protein is Cytochrome b6-f complex subunit 5.